Reading from the N-terminus, the 1367-residue chain is Dynactin, 150 kDa isoform (1367 aa).

The 43-residue stretch at 28–70 (GETAFAPGTWVGIELDEPSGKNDGSVQGERYFNCEMGYGMFVR) folds into the CAP-Gly domain. Residues 76–318 (VIAQPPPPPP…NLKATTITPR (243 aa)) are disordered. 2 stretches are compositionally biased toward low complexity: residues 88–99 (TFRRSVTTRPTS) and 132–149 (PSRT…RSPT). The span at 150-163 (KQLATASSSGNPSR) shows a compositional bias: polar residues. Low complexity-rich tracts occupy residues 164–190 (SGTP…SRHS) and 243–259 (STGS…KRGS). Coiled coils occupy residues 321–598 (ITNT…MQEE), 637–698 (LQSD…EAEQ), and 1039–1199 (AELK…RARL).

Belongs to the dynactin 150 kDa subunit family. As to quaternary structure, large macromolecular complex of at least 10 components; p150(glued) binds directly to microtubules and to cytoplasmic dynein.

Its subcellular location is the cytoplasm. The protein resides in the cytoskeleton. Required for the cytoplasmic dynein-driven retrograde movement of vesicles and organelles along microtubules. Dynein-dynactin interaction is a key component of the mechanism of axonal transport of vesicles and organelles. The chain is Dynactin, 150 kDa isoform (ro-3) from Neurospora crassa (strain ATCC 24698 / 74-OR23-1A / CBS 708.71 / DSM 1257 / FGSC 987).